The sequence spans 66 residues: MWKVNDQGFLNISVTGTKFNLIATTGKLGFYTDPPSHLIVIPLKIFPVHKFSKNEPNKKQKRFIYF.

Residue N11 is glycosylated (N-linked (GlcNAc...) asparagine; by host).

This sequence belongs to the asfivirus I177L family.

It localises to the virion. The protein is Protein I177L of Ornithodoros (relapsing fever ticks).